A 274-amino-acid chain; its full sequence is Large ribosomal subunit protein uL2 (274 aa).

The disordered stretch occupies residues 222 to 274; sequence GVAMNPVDHPHGGGEGRGKGHHPQSPWGQLAKGYKTRRGKKASDKLIVRRRNG. A compositionally biased stretch (basic and acidic residues) spans 229–239; it reads DHPHGGGEGRG.

The protein belongs to the universal ribosomal protein uL2 family. In terms of assembly, part of the 50S ribosomal subunit. Forms a bridge to the 30S subunit in the 70S ribosome.

In terms of biological role, one of the primary rRNA binding proteins. Required for association of the 30S and 50S subunits to form the 70S ribosome, for tRNA binding and peptide bond formation. It has been suggested to have peptidyltransferase activity; this is somewhat controversial. Makes several contacts with the 16S rRNA in the 70S ribosome. The polypeptide is Large ribosomal subunit protein uL2 (Thermosipho africanus (strain TCF52B)).